Here is a 390-residue protein sequence, read N- to C-terminus: MLHVNKCQLCETRRPSICESCLKKQLYDFYHKRDEFSRDIESELEKVAKLKSESFSLKGKITQKEELTYRLQNLAASLNEKKSLSCDLHSRKQLIEDDLSNRKKSINIASQKLAGLSHSTSDYFSKEYLTAYRRSELLQNKLHEYQKKLITRVLDMYQLHWQRDLVLNTQGCTQKSAQMGSEFNPDSIDSSLAYRLSKLSMGNSKSDLSHSDNETGHFYSNFFSQVMELNASVTISGIPVCIRSKEKMFLNPDCALTLSFICIFLAQYTSIPLPCPLQLPSPDQKPMTSFSSEQMLYIMYNIVWISWNCGIFSFPRGITQSQLFELMQYTGFWLVQLRTKPLTSQKPDWHYKMGMDFDLFHRLYLARLPIPINYSSLRSRSSSKPYQLIS.

The segment at 7–21 (CQLCETRRPSICESC) is cysteine repeats. Positions 31–83 (HKRDEFSRDIESELEKVAKLKSESFSLKGKITQKEELTYRLQNLAASLNEKKS) form a coiled coil.

Belongs to the ATG14 family. Component of the autophagy-specific vps34 PI3-kinase complex I composed of vps15, atg6, pik3/vps34, atg14 and atg38.

It is found in the cytoplasm. The protein localises to the preautophagosomal structure membrane. It localises to the vacuole membrane. In terms of biological role, functions as a part of the autophagy-specific VPS34 PI3-kinase complex I that plays a role in autophagosome assembly. This complex is essential to recruit the atg8-phosphatidylinositol conjugate and the atg12-atg5 conjugate to the pre-autophagosomal structure. This chain is Autophagy-related protein 14 (atg14), found in Schizosaccharomyces pombe (strain 972 / ATCC 24843) (Fission yeast).